Consider the following 59-residue polypeptide: Cecropin-B1 (59 aa).

The first 23 residues, 1–23, serve as a signal peptide directing secretion; it reads MNFNKLFLIVILAALLLLGQTEA. Residue L57 is modified to Leucine amide.

This sequence belongs to the cecropin family.

The protein resides in the secreted. Its function is as follows. Cecropins have lytic and antibacterial activity against several Gram-positive and Gram-negative bacteria. The sequence is that of Cecropin-B1 (CECB1) from Culex pipiens pipiens (Northern house mosquito).